Reading from the N-terminus, the 265-residue chain is Uridylate kinase (265 aa).

Positions 1 to 29 are disordered; it reads MTESREPHVAGSAAPRPEPANGLASGQPS. 40–43 contributes to the ATP binding site; the sequence is KLGG. Gly-81 is a binding site for UMP. Gly-82 and Arg-86 together coordinate ATP. Residues Asp-101 and 162–169 contribute to the UMP site; that span reads MGLPYFST. ATP is bound by residues Phe-195 and Asp-198.

The protein belongs to the UMP kinase family. As to quaternary structure, homohexamer.

The protein localises to the cytoplasm. It carries out the reaction UMP + ATP = UDP + ADP. It functions in the pathway pyrimidine metabolism; CTP biosynthesis via de novo pathway; UDP from UMP (UMPK route): step 1/1. With respect to regulation, inhibited by UTP. Its function is as follows. Catalyzes the reversible phosphorylation of UMP to UDP. The sequence is that of Uridylate kinase from Mycobacterium avium (strain 104).